The primary structure comprises 133 residues: Fatty acid-binding protein, heart (133 aa).

A2 bears the N-acetylalanine mark. Residue T8 is modified to Phosphothreonine. At Y20 the chain carries Phosphotyrosine; by Tyr-kinases. At S23 the chain carries Phosphoserine. T30 is subject to Phosphothreonine. S83 bears the Phosphoserine mark. 127–129 (RTY) contributes to the (9Z)-octadecenoate binding site. A hexadecanoate-binding site is contributed by 127 to 129 (RTY). 127–129 (RTY) contributes to the octadecanoate binding site.

Belongs to the calycin superfamily. Fatty-acid binding protein (FABP) family.

Its subcellular location is the cytoplasm. Functionally, FABPs are thought to play a role in the intracellular transport of long-chain fatty acids and their acyl-CoA esters. FABPs are important elements related to the hibernating state in mammals. The chain is Fatty acid-binding protein, heart (FABP3) from Myotis lucifugus (Little brown bat).